Here is a 211-residue protein sequence, read N- to C-terminus: Ribosomal RNA small subunit methyltransferase G (211 aa).

S-adenosyl-L-methionine is bound by residues G79, L84, V130–E131, and R145.

It belongs to the methyltransferase superfamily. RNA methyltransferase RsmG family.

It is found in the cytoplasm. The catalysed reaction is guanosine(527) in 16S rRNA + S-adenosyl-L-methionine = N(7)-methylguanosine(527) in 16S rRNA + S-adenosyl-L-homocysteine. Specifically methylates the N7 position of guanine in position 527 of 16S rRNA. The protein is Ribosomal RNA small subunit methyltransferase G of Alteromonas mediterranea (strain DSM 17117 / CIP 110805 / LMG 28347 / Deep ecotype).